We begin with the raw amino-acid sequence, 215 residues long: UPF0502 protein YceH (215 aa).

The protein belongs to the UPF0502 family.

This chain is UPF0502 protein YceH, found in Salmonella schwarzengrund (strain CVM19633).